We begin with the raw amino-acid sequence, 111 residues long: Large ribosomal subunit protein uL22 (111 aa).

Belongs to the universal ribosomal protein uL22 family. As to quaternary structure, part of the 50S ribosomal subunit.

This protein binds specifically to 23S rRNA; its binding is stimulated by other ribosomal proteins, e.g. L4, L17, and L20. It is important during the early stages of 50S assembly. It makes multiple contacts with different domains of the 23S rRNA in the assembled 50S subunit and ribosome. In terms of biological role, the globular domain of the protein is located near the polypeptide exit tunnel on the outside of the subunit, while an extended beta-hairpin is found that lines the wall of the exit tunnel in the center of the 70S ribosome. This Chlamydia trachomatis serovar L2b (strain UCH-1/proctitis) protein is Large ribosomal subunit protein uL22.